We begin with the raw amino-acid sequence, 218 residues long: Octanoyltransferase (218 aa).

One can recognise a BPL/LPL catalytic domain in the interval 32 to 214; it reads ALTPDEIWLV…HFTQLLGYND (183 aa). Substrate is bound by residues 71–78, 143–145, and 156–158; these read RGGQITYH, SLG, and GLA. The active-site Acyl-thioester intermediate is the C174.

Belongs to the LipB family.

The protein localises to the cytoplasm. The enzyme catalyses octanoyl-[ACP] + L-lysyl-[protein] = N(6)-octanoyl-L-lysyl-[protein] + holo-[ACP] + H(+). Its pathway is protein modification; protein lipoylation via endogenous pathway; protein N(6)-(lipoyl)lysine from octanoyl-[acyl-carrier-protein]: step 1/2. In terms of biological role, catalyzes the transfer of endogenously produced octanoic acid from octanoyl-acyl-carrier-protein onto the lipoyl domains of lipoate-dependent enzymes. Lipoyl-ACP can also act as a substrate although octanoyl-ACP is likely to be the physiological substrate. The chain is Octanoyltransferase from Histophilus somni (strain 129Pt) (Haemophilus somnus).